A 564-amino-acid polypeptide reads, in one-letter code: 4-coumarate--CoA ligase 1 (564 aa).

Residues S209, S210, G211, T212, T213, and K217 each contribute to the ATP site. (E)-4-coumaroyl-AMP-binding residues include Y259 and T263. CoA is bound at residue R280. Residues 282–351 are SBD1; it reads DLAAMMDLVE…AKLPGAVLGQ (70 aa). (E)-4-coumaroyl-AMP is bound by residues A329, Q351, G352, T356, and M364. ATP contacts are provided by Q351, G352, and T356. An SBD2 region spans residues 352 to 419; the sequence is GYGMTEAGPV…IRGQQIMKGY (68 aa). 2 residues coordinate ATP: D440 and R455. Residues K457 and K461 each contribute to the (E)-4-coumaroyl-AMP site. 2 residues coordinate CoA: R463 and G464. Residue K547 coordinates ATP.

This sequence belongs to the ATP-dependent AMP-binding enzyme family. Requires Mg(2+) as cofactor. As to expression, expressed in roots, stems, leaf blades and leaf sheaths.

It carries out the reaction (E)-ferulate + ATP + CoA = (E)-feruloyl-CoA + AMP + diphosphate. The catalysed reaction is (E)-4-coumarate + ATP + CoA = (E)-4-coumaroyl-CoA + AMP + diphosphate. The enzyme catalyses (E)-cinnamate + ATP + CoA = (E)-cinnamoyl-CoA + AMP + diphosphate. It catalyses the reaction (E)-caffeate + ATP + CoA = (E)-caffeoyl-CoA + AMP + diphosphate. It carries out the reaction (E)-ferulate + ATP + H(+) = (E)-feruloyl-AMP + diphosphate. The catalysed reaction is (E)-feruloyl-AMP + CoA = (E)-feruloyl-CoA + AMP + H(+). The enzyme catalyses (E)-4-coumarate + ATP + H(+) = (E)-4-coumaroyl-AMP + diphosphate. It catalyses the reaction (E)-4-coumaroyl-AMP + CoA = (E)-4-coumaroyl-CoA + AMP + H(+). It carries out the reaction (E)-caffeate + ATP + H(+) = (E)-caffeoyl-AMP + diphosphate. The catalysed reaction is (E)-caffeoyl-AMP + CoA = (E)-caffeoyl-CoA + AMP + H(+). Its pathway is phytoalexin biosynthesis; 3,4',5-trihydroxystilbene biosynthesis; 3,4',5-trihydroxystilbene from trans-4-coumarate: step 1/2. In terms of biological role, involved in the phenylpropanoid metabolism by mediating the activation of a number of hydroxycinnamates for the biosynthesis of monolignols and other phenolic secondary metabolites. Catalyzes the formation of CoA esters of cinnamate, 4-coumarate, caffeate and ferulate. Is more efficient with substrates in the following order: ferulate &gt; 4-coumarate &gt; cinnamate &gt; caffeate. Cannot convert sinapate to its corresponding CoA ester. Follows a two-step reaction mechanism, wherein the carboxylate substrate first undergoes adenylation by ATP, followed by a thioesterification in the presence of CoA to yield the final CoA thioester. This is 4-coumarate--CoA ligase 1 from Oryza sativa subsp. japonica (Rice).